Reading from the N-terminus, the 510-residue chain is O-acetyltransferase pyr7 (510 aa).

Belongs to the fumigaclavine B O-acetyltransferase family.

It functions in the pathway secondary metabolite biosynthesis; terpenoid biosynthesis. Functionally, O-acetyltransferase; part of the gene cluster that mediates the biosynthesis of pyripyropene A, a specific human acyl-coenzyme A:cholesterol acyltransferase 2 inhibitor. The first step of the pathway is the synthesis of nicotinyl-CoA from nicotinic acid by the nicotinic acid-CoA ligase pyr1. Nicotinyl-CoA is then a substrate of polyketide synthase pyr2 to produce 4-hydroxy-6-(3-pyridinyl)-2H-pyran-2-one (HPPO) which is further prenylated by the polyprenyl transferase pyr6 to yield farnesyl-HPPO. The next steps consist of an epoxidation of farnesyl-HPPO to epoxyfarnesyl-HPPO by FAD-dependent monooxygenase pyr5 and a cyclization of the terpenoid portion by the terpene cyclase pyr4 to yield deacetyl-pyripyropene E. The 2 cytochrome P450 monooxygenases pyr3 and pyr9, and the 2 acetyltransferases pyr7 and pyr8 are involved in the conversion of deacetyl-pyripyropene E into pyripyropene A through several cycles of oxidation and acetylation steps. Pyr7 acetylates deacetyl-pyripyropene E to pyripyropene E which is oxidized to 11-deacetyl-pyripyropene O by pyr3, which is in turn acetylated into pyripyropene O by pyr8. Pyripyropene O is then oxidized to deacetyl-pyripyropene A by pyr9. Deacetyl-pyripyropene A is finally acetylated to pyripyropene A by pyr8. The sequence is that of O-acetyltransferase pyr7 from Aspergillus fumigatus (strain ATCC MYA-4609 / CBS 101355 / FGSC A1100 / Af293) (Neosartorya fumigata).